Reading from the N-terminus, the 579-residue chain is Capsid vertex component 2 (579 aa).

The segment at 1 to 50 (MTARYGFGSISFPNKCGIFLSTTKNFIAPNFPIHYWTAPAFELRGRMNPD) is interaction with major capsid protein/MCP.

The protein belongs to the herpesviridae CVC2 protein family. In terms of assembly, heterodimerizes with CVC1. Interacts with major capsid protein/MCP and triplex capsid protein 1/TRX1 at the pentamer vertices. Interacts with the large tegument protein/LTP.

The protein resides in the virion. Its subcellular location is the host nucleus. Capsid vertex-specific component that plays a role during viral DNA encapsidation, assuring correct genome cleavage and presumably stabilizing capsids that contain full-length viral genomes. Participates in the interaction between the capsid and the tegument through interaction with the large tegument protein/LTP. This is Capsid vertex component 2 from Homo sapiens (Human).